We begin with the raw amino-acid sequence, 438 residues long: Serine--tRNA ligase (438 aa).

Threonine 243 to glutamate 245 is a binding site for L-serine. Residue arginine 274 to glutamate 276 participates in ATP binding. Residue glutamate 297 participates in L-serine binding. ATP is bound at residue glutamate 361–serine 364. Serine 396 serves as a coordination point for L-serine.

The protein belongs to the class-II aminoacyl-tRNA synthetase family. Type-1 seryl-tRNA synthetase subfamily. In terms of assembly, homodimer. The tRNA molecule binds across the dimer.

It is found in the cytoplasm. It catalyses the reaction tRNA(Ser) + L-serine + ATP = L-seryl-tRNA(Ser) + AMP + diphosphate + H(+). It carries out the reaction tRNA(Sec) + L-serine + ATP = L-seryl-tRNA(Sec) + AMP + diphosphate + H(+). It participates in aminoacyl-tRNA biosynthesis; selenocysteinyl-tRNA(Sec) biosynthesis; L-seryl-tRNA(Sec) from L-serine and tRNA(Sec): step 1/1. Catalyzes the attachment of serine to tRNA(Ser). Is also able to aminoacylate tRNA(Sec) with serine, to form the misacylated tRNA L-seryl-tRNA(Sec), which will be further converted into selenocysteinyl-tRNA(Sec). The sequence is that of Serine--tRNA ligase from Ralstonia pickettii (strain 12J).